Reading from the N-terminus, the 444-residue chain is Interferon-induced protein 44 (444 aa).

The TLDc domain maps to 1–152 (MAVTTRLTWL…IQDYEVFRCE (152 aa)).

This sequence belongs to the IFI44 family.

The protein resides in the cytoplasm. This protein aggregates to form microtubular structures. The sequence is that of Interferon-induced protein 44 (IFI44) from Homo sapiens (Human).